An 867-amino-acid chain; its full sequence is DNA mismatch repair protein MutS (867 aa).

606 to 613 (GPNMSGKS) lines the ATP pocket.

This sequence belongs to the DNA mismatch repair MutS family.

This protein is involved in the repair of mismatches in DNA. It is possible that it carries out the mismatch recognition step. This protein has a weak ATPase activity. The chain is DNA mismatch repair protein MutS from Oceanobacillus iheyensis (strain DSM 14371 / CIP 107618 / JCM 11309 / KCTC 3954 / HTE831).